A 337-amino-acid chain; its full sequence is Manganese-dependent ADP-ribose/CDP-alcohol diphosphatase (337 aa).

Met-1 carries the post-translational modification N-acetylmethionine. Zn(2+)-binding residues include Asp-25, Gln-27, Asp-74, Asn-110, His-241, His-278, and His-280.

This sequence belongs to the ADPRibase-Mn family. In terms of assembly, monomer. It depends on Mg(2+) as a cofactor.

It catalyses the reaction CDP-choline + H2O = phosphocholine + CMP + 2 H(+). It carries out the reaction ADP-D-ribose + H2O = D-ribose 5-phosphate + AMP + 2 H(+). The catalysed reaction is CDP-glycerol + H2O = sn-glycerol 3-phosphate + CMP + 2 H(+). Hydrolyzes ADP-ribose, IDP-ribose, CDP-glycerol, CDP-choline and CDP-ethanolamine, but not other non-reducing ADP-sugars or CDP-glucose. May be involved in immune cell signaling as suggested by the second-messenger role of ADP-ribose, which activates TRPM2 as a mediator of oxidative/nitrosative stress. The chain is Manganese-dependent ADP-ribose/CDP-alcohol diphosphatase (ADPRM) from Bos taurus (Bovine).